The chain runs to 552 residues: Small ribosomal subunit protein bS1 (552 aa).

S1 motif domains are found at residues Thr-31–Gln-101, Asn-116–Lys-179, Thr-200–Lys-268, Gly-285–Lys-355, Gly-372–Lys-440, and Asp-457–His-521.

Belongs to the bacterial ribosomal protein bS1 family.

Its function is as follows. Binds mRNA; thus facilitating recognition of the initiation point. It is needed to translate mRNA with a short Shine-Dalgarno (SD) purine-rich sequence. This is Small ribosomal subunit protein bS1 (rpsA) from Helicobacter pylori (strain J99 / ATCC 700824) (Campylobacter pylori J99).